The sequence spans 262 residues: Hydroxyethylthiazole kinase (262 aa).

Methionine 50 lines the substrate pocket. 2 residues coordinate ATP: arginine 125 and threonine 171. Residue glycine 198 coordinates substrate.

The protein belongs to the Thz kinase family. Mg(2+) is required as a cofactor.

It catalyses the reaction 5-(2-hydroxyethyl)-4-methylthiazole + ATP = 4-methyl-5-(2-phosphooxyethyl)-thiazole + ADP + H(+). It participates in cofactor biosynthesis; thiamine diphosphate biosynthesis; 4-methyl-5-(2-phosphoethyl)-thiazole from 5-(2-hydroxyethyl)-4-methylthiazole: step 1/1. Catalyzes the phosphorylation of the hydroxyl group of 4-methyl-5-beta-hydroxyethylthiazole (THZ). The protein is Hydroxyethylthiazole kinase of Escherichia coli O7:K1 (strain IAI39 / ExPEC).